The sequence spans 358 residues: Popeye domain-containing protein 1 (358 aa).

At 1–48 (MNSTESIPLAQSTVAGFTSELESLTPVPSNETTCENWREIHHLVFHVA) the chain is on the extracellular side. N-linked (GlcNAc...) asparagine glycans are attached at residues asparagine 2 and asparagine 30. A helical transmembrane segment spans residues 49-69 (NVCFAVGLLIPTTLHLHMILL). Residue arginine 70 is a topological domain, cytoplasmic. Residues 71–91 (VMLSLGCTLYVVWATLYRCAL) form a helical membrane-spanning segment. Position 92 (aspartate 92) is a topological domain, extracellular. The helical transmembrane segment at 93–113 (VMIWNSVFLGINILHLSYLLY) threads the bilayer. The required for interaction with CAV3 stretch occupies residues 93 to 115 (VMIWNSVFLGINILHLSYLLYKK). The Cytoplasmic portion of the chain corresponds to 114–358 (KKRPVKIEKE…PDALKVHQLP (245 aa)). A required for interaction with KCNK2 region spans residues 136–186 (RVPPDLFRRLTGQFCMIQTLKRGQVYATEDKTSVDDRLSILLKGRMKVSYR). A phosphoserine mark is found at serine 295 and serine 318. Over residues 313–323 (SSSTASLPMSS) the composition is skewed to low complexity. The segment at 313–350 (SSSTASLPMSSPQQRASAKMKPIEEGVEDDDEVFVSPD) is disordered.

This sequence belongs to the popeye family. Homodimer. Homodimerization requires the C-terminus cytoplasmic region. Interacts (via the C-terminus cytoplasmic tail) with TJP1. Interacts (via the C-terminus cytoplasmic tail) with ARHGEF25/GEFT (via the DH domain). Interacts (via the C-terminus cytoplasmic tail) with VAMP3. Interacts with KCNK2; the interaction enhances KCNK2 surface expression and is inhibited by cAMP. Interacts with CAV3. As to expression, expressed in epithelial cells, skeletal muscle, heart and intestinal smooth muscle (at protein level). Expressed in fetal and adult heart and skeletal muscle.

It is found in the lateral cell membrane. The protein localises to the cell junction. The protein resides in the tight junction. Its subcellular location is the membrane. It localises to the cell membrane. It is found in the sarcolemma. The protein localises to the caveola. In terms of biological role, cell adhesion molecule involved in the establishment and/or maintenance of cell integrity. Involved in the formation and regulation of the tight junction (TJ) paracellular permeability barrier in epithelial cells. Plays a role in VAMP3-mediated vesicular transport and recycling of different receptor molecules through its interaction with VAMP3. Plays a role in the regulation of cell shape and movement by modulating the Rho-family GTPase activity through its interaction with ARHGEF25/GEFT. Induces primordial adhesive contact and aggregation of epithelial cells in a Ca(2+)-independent manner. Also involved in striated muscle regeneration and repair and in the regulation of cell spreading. Important for the maintenance of cardiac function. Plays a regulatory function in heart rate dynamics mediated, at least in part, through cAMP-binding and, probably, by increasing cell surface expression of the potassium channel KCNK2 and enhancing current density. Is a caveolae-associated protein important for the preservation of caveolae structural and functional integrity as well as for heart protection against ischemia injury. The chain is Popeye domain-containing protein 1 from Mus musculus (Mouse).